The following is a 355-amino-acid chain: UDP-N-acetylglucosamine--N-acetylmuramyl-(pentapeptide) pyrophosphoryl-undecaprenol N-acetylglucosamine transferase (355 aa).

UDP-N-acetyl-alpha-D-glucosamine-binding positions include 13–15 (TGG), asparagine 125, arginine 162, serine 190, isoleucine 244, and glutamine 289.

Belongs to the glycosyltransferase 28 family. MurG subfamily.

Its subcellular location is the cell inner membrane. The enzyme catalyses di-trans,octa-cis-undecaprenyl diphospho-N-acetyl-alpha-D-muramoyl-L-alanyl-D-glutamyl-meso-2,6-diaminopimeloyl-D-alanyl-D-alanine + UDP-N-acetyl-alpha-D-glucosamine = di-trans,octa-cis-undecaprenyl diphospho-[N-acetyl-alpha-D-glucosaminyl-(1-&gt;4)]-N-acetyl-alpha-D-muramoyl-L-alanyl-D-glutamyl-meso-2,6-diaminopimeloyl-D-alanyl-D-alanine + UDP + H(+). Its pathway is cell wall biogenesis; peptidoglycan biosynthesis. Cell wall formation. Catalyzes the transfer of a GlcNAc subunit on undecaprenyl-pyrophosphoryl-MurNAc-pentapeptide (lipid intermediate I) to form undecaprenyl-pyrophosphoryl-MurNAc-(pentapeptide)GlcNAc (lipid intermediate II). The polypeptide is UDP-N-acetylglucosamine--N-acetylmuramyl-(pentapeptide) pyrophosphoryl-undecaprenol N-acetylglucosamine transferase (Neisseria meningitidis serogroup C / serotype 2a (strain ATCC 700532 / DSM 15464 / FAM18)).